A 249-amino-acid chain; its full sequence is Exosome complex component Rrp41 (249 aa).

Belongs to the RNase PH family. Rrp41 subfamily. As to quaternary structure, component of the archaeal exosome complex. Forms a hexameric ring-like arrangement composed of 3 Rrp41-Rrp42 heterodimers. The hexameric ring associates with a trimer of Rrp4 and/or Csl4 subunits.

It localises to the cytoplasm. Catalytic component of the exosome, which is a complex involved in RNA degradation. Has 3'-&gt;5' exoribonuclease activity. Can also synthesize heteromeric RNA-tails. This chain is Exosome complex component Rrp41, found in Pyrococcus abyssi (strain GE5 / Orsay).